A 459-amino-acid chain; its full sequence is 23S rRNA (uracil-C(5))-methyltransferase RlmCD (459 aa).

The TRAM domain occupies proline 6–glutamate 64. [4Fe-4S] cluster contacts are provided by cysteine 77, cysteine 83, cysteine 86, and cysteine 166. The S-adenosyl-L-methionine site is built by glutamine 290, tyrosine 319, glutamate 340, and aspartate 388. Cysteine 415 functions as the Nucleophile in the catalytic mechanism.

It belongs to the class I-like SAM-binding methyltransferase superfamily. RNA M5U methyltransferase family.

The enzyme catalyses uridine(747) in 23S rRNA + S-adenosyl-L-methionine = 5-methyluridine(747) in 23S rRNA + S-adenosyl-L-homocysteine + H(+). It carries out the reaction uridine(1939) in 23S rRNA + S-adenosyl-L-methionine = 5-methyluridine(1939) in 23S rRNA + S-adenosyl-L-homocysteine + H(+). In terms of biological role, catalyzes the formation of 5-methyl-uridine at positions 747 (m5U747) and 1939 (m5U1939) in 23S rRNA. This Bacillus subtilis (strain 168) protein is 23S rRNA (uracil-C(5))-methyltransferase RlmCD (rlmCD).